Here is a 1120-residue protein sequence, read N- to C-terminus: TBC1 domain family member 8B (1120 aa).

GRAM domains follow at residues Leu145–Ser212 and Glu285–Asn353. The region spanning Gly487–Gly674 is the Rab-GAP TBC domain. One can recognise an EF-hand domain in the interval Asn858–Gly893. Residues Ser1035 to Pro1066 form a disordered region. Residues Ser1054–Pro1066 show a composition bias toward basic and acidic residues.

In terms of assembly, interacts (via domain Rab-GAP TBC) with RAB11B (in GTP-bound form). As to expression, kidney (at protein level).

Its subcellular location is the cytoplasm. It localises to the cytosol. Its function is as follows. Involved in vesicular recycling, probably as a RAB11B GTPase-activating protein. This Homo sapiens (Human) protein is TBC1 domain family member 8B (TBC1D8B).